The following is a 179-amino-acid chain: Large ribosomal subunit protein uL5 (179 aa).

It belongs to the universal ribosomal protein uL5 family. Part of the 50S ribosomal subunit; part of the 5S rRNA/L5/L18/L25 subcomplex. Contacts the 5S rRNA and the P site tRNA. Forms a bridge to the 30S subunit in the 70S ribosome.

Its function is as follows. This is one of the proteins that bind and probably mediate the attachment of the 5S RNA into the large ribosomal subunit, where it forms part of the central protuberance. In the 70S ribosome it contacts protein S13 of the 30S subunit (bridge B1b), connecting the 2 subunits; this bridge is implicated in subunit movement. Contacts the P site tRNA; the 5S rRNA and some of its associated proteins might help stabilize positioning of ribosome-bound tRNAs. This chain is Large ribosomal subunit protein uL5, found in Pseudomonas putida (strain ATCC 700007 / DSM 6899 / JCM 31910 / BCRC 17059 / LMG 24140 / F1).